Reading from the N-terminus, the 197-residue chain is Imidazoleglycerol-phosphate dehydratase (197 aa).

This sequence belongs to the imidazoleglycerol-phosphate dehydratase family.

It localises to the cytoplasm. The enzyme catalyses D-erythro-1-(imidazol-4-yl)glycerol 3-phosphate = 3-(imidazol-4-yl)-2-oxopropyl phosphate + H2O. It functions in the pathway amino-acid biosynthesis; L-histidine biosynthesis; L-histidine from 5-phospho-alpha-D-ribose 1-diphosphate: step 6/9. In Methylococcus capsulatus (strain ATCC 33009 / NCIMB 11132 / Bath), this protein is Imidazoleglycerol-phosphate dehydratase.